The chain runs to 421 residues: 3-phosphoshikimate 1-carboxyvinyltransferase (421 aa).

The 3-phosphoshikimate site is built by lysine 20, serine 21, and arginine 25. Residue lysine 20 participates in phosphoenolpyruvate binding. Residues glycine 90 and arginine 117 each coordinate phosphoenolpyruvate. 3-phosphoshikimate-binding residues include serine 162, serine 163, glutamine 164, serine 190, aspartate 304, and lysine 331. Glutamine 164 provides a ligand contact to phosphoenolpyruvate. Residue aspartate 304 is the Proton acceptor of the active site. Residues arginine 335 and arginine 376 each coordinate phosphoenolpyruvate.

This sequence belongs to the EPSP synthase family. As to quaternary structure, monomer.

The protein resides in the cytoplasm. The catalysed reaction is 3-phosphoshikimate + phosphoenolpyruvate = 5-O-(1-carboxyvinyl)-3-phosphoshikimate + phosphate. The protein operates within metabolic intermediate biosynthesis; chorismate biosynthesis. Functionally, catalyzes the transfer of the enolpyruvyl moiety of phosphoenolpyruvate (PEP) to the 5-hydroxyl of shikimate-3-phosphate (S3P) to produce enolpyruvyl shikimate-3-phosphate and inorganic phosphate. This is 3-phosphoshikimate 1-carboxyvinyltransferase from Methanothrix thermoacetophila (strain DSM 6194 / JCM 14653 / NBRC 101360 / PT) (Methanosaeta thermophila).